Reading from the N-terminus, the 110-residue chain is Progonadoliberin-2 (110 aa).

The N-terminal stretch at 1–26 (MASIGQGLVLLLLLLLLTAQPGPLKA) is a signal peptide. The tract at residues 25 to 85 (KAQHWSHGWY…KALAPPEDTV (61 aa)) is disordered. Glycine 36 carries the post-translational modification Glycine amide.

Belongs to the GnRH family. In terms of tissue distribution, midbrain.

The protein resides in the secreted. Its function is as follows. Stimulates the secretion of gonadotropins; it stimulates the secretion of both luteinizing and follicle-stimulating hormones. This is Progonadoliberin-2 (GNRH2) from Suncus murinus (Asian house shrew).